The following is an 84-amino-acid chain: Beta-defensin 119 (84 aa).

The signal sequence occupies residues 1 to 21 (MKLLYLFLAILLAIEEPVISG). 3 disulfide bridges follow: C28-C55, C35-C49, and C39-C56.

This sequence belongs to the beta-defensin family.

The protein resides in the secreted. Its function is as follows. Has antibacterial activity. This Gorilla gorilla gorilla (Western lowland gorilla) protein is Beta-defensin 119 (DEFB119).